The primary structure comprises 296 residues: GTPase Era (296 aa).

The Era-type G domain maps to 3–170 (KSGFITIVGR…LELMVKYLPE (168 aa)). A G1 region spans residues 11–18 (GRPNVGKS). 11–18 (GRPNVGKS) lines the GTP pocket. The segment at 37–41 (QTTRN) is G2. The segment at 58–61 (DTPG) is G3. Residues 58–62 (DTPGI) and 120–123 (NKVD) each bind GTP. Positions 120 to 123 (NKVD) are G4. Positions 149-151 (ISA) are G5. In terms of domain architecture, KH type-2 spans 201–278 (LSQEVPHGIA…NIKIWVKVRK (78 aa)).

This sequence belongs to the TRAFAC class TrmE-Era-EngA-EngB-Septin-like GTPase superfamily. Era GTPase family. In terms of assembly, monomer.

It is found in the cytoplasm. Its subcellular location is the cell membrane. An essential GTPase that binds both GDP and GTP, with rapid nucleotide exchange. Plays a role in 16S rRNA processing and 30S ribosomal subunit biogenesis and possibly also in cell cycle regulation and energy metabolism. This chain is GTPase Era, found in Clostridium perfringens (strain ATCC 13124 / DSM 756 / JCM 1290 / NCIMB 6125 / NCTC 8237 / Type A).